We begin with the raw amino-acid sequence, 533 residues long: Probable bifunctional tRNA threonylcarbamoyladenosine biosynthesis protein (533 aa).

Positions 1–328 (MRILGIEGTA…FRPDAVTVTW (328 aa)) are kae1. Fe cation is bound by residues histidine 112 and histidine 116. L-threonylcarbamoyladenylate is bound by residues 133 to 137 (NASGA), aspartate 165, glycine 178, glutamate 182, and asparagine 261. Residue aspartate 289 participates in Fe cation binding. Residues 339-533 (PATLDKTPVR…RDIESRGRYH (195 aa)) form the Protein kinase domain. Residues 347–354 (VRGAEAIV) and lysine 363 each bind ATP. Aspartate 452 (proton acceptor; for kinase activity) is an active-site residue.

The protein in the N-terminal section; belongs to the KAE1 / TsaD family. This sequence in the C-terminal section; belongs to the protein kinase superfamily. Tyr protein kinase family. BUD32 subfamily. Component of the KEOPS complex that consists of Kae1, Bud32, Cgi121 and Pcc1; the whole complex dimerizes. The cofactor is Fe(2+).

It is found in the cytoplasm. It carries out the reaction L-seryl-[protein] + ATP = O-phospho-L-seryl-[protein] + ADP + H(+). The catalysed reaction is L-threonyl-[protein] + ATP = O-phospho-L-threonyl-[protein] + ADP + H(+). The enzyme catalyses L-threonylcarbamoyladenylate + adenosine(37) in tRNA = N(6)-L-threonylcarbamoyladenosine(37) in tRNA + AMP + H(+). Functionally, required for the formation of a threonylcarbamoyl group on adenosine at position 37 (t(6)A37) in tRNAs that read codons beginning with adenine. Is a component of the KEOPS complex that is probably involved in the transfer of the threonylcarbamoyl moiety of threonylcarbamoyl-AMP (TC-AMP) to the N6 group of A37. The Kae1 domain likely plays a direct catalytic role in this reaction. The Bud32 domain probably displays kinase activity that regulates Kae1 function. The polypeptide is Probable bifunctional tRNA threonylcarbamoyladenosine biosynthesis protein (Haloquadratum walsbyi (strain DSM 16790 / HBSQ001)).